A 466-amino-acid polypeptide reads, in one-letter code: IQ domain-containing protein C (466 aa).

Positions 6-35 (LVRKVSALQACVRGFLVRRQFQSLRAEYEA) constitute an IQ domain. Disordered stretches follow at residues 105 to 157 (KSGE…PHSQ), 214 to 233 (EQAC…DQSY), 238 to 310 (TGEL…QTFG), and 394 to 466 (VLDL…EPPG). Over residues 132 to 153 (PSQEKTRDTTRMENPEATDQRL) the composition is skewed to basic and acidic residues. The segment covering 282–293 (GPPSSIPSNSQA) has biased composition (polar residues). A compositionally biased stretch (basic and acidic residues) spans 297-306 (RLTKGPDDGR). Ser438 bears the Phosphoserine mark.

The polypeptide is IQ domain-containing protein C (IQCC) (Homo sapiens (Human)).